The following is a 78-amino-acid chain: Acyl carrier protein (78 aa).

One can recognise a Carrier domain in the interval 1-76 (MAIHPKVKDI…DVASYLEKKG (76 aa)). Serine 36 bears the O-(pantetheine 4'-phosphoryl)serine mark.

This sequence belongs to the acyl carrier protein (ACP) family. In terms of processing, 4'-phosphopantetheine is transferred from CoA to a specific serine of apo-ACP by AcpS. This modification is essential for activity because fatty acids are bound in thioester linkage to the sulfhydryl of the prosthetic group.

Its subcellular location is the cytoplasm. It functions in the pathway lipid metabolism; fatty acid biosynthesis. Its function is as follows. Carrier of the growing fatty acid chain in fatty acid biosynthesis. This chain is Acyl carrier protein, found in Bdellovibrio bacteriovorus (strain ATCC 15356 / DSM 50701 / NCIMB 9529 / HD100).